Reading from the N-terminus, the 194-residue chain is Phosphoheptose isomerase (194 aa).

The region spanning 37 to 194 (ISNSFKQGGK…LIEFEMAKQA (158 aa)) is the SIS domain. 52 to 54 (NGG) serves as a coordination point for substrate. Zn(2+) is bound by residues His-61 and Glu-65. Substrate is bound by residues Glu-65, 93-94 (ND), 119-121 (STS), Ser-124, and Gln-172. 2 residues coordinate Zn(2+): Gln-172 and His-180.

Belongs to the SIS family. GmhA subfamily. Homotetramer. Zn(2+) serves as cofactor.

The protein resides in the cytoplasm. It catalyses the reaction 2 D-sedoheptulose 7-phosphate = D-glycero-alpha-D-manno-heptose 7-phosphate + D-glycero-beta-D-manno-heptose 7-phosphate. Its pathway is carbohydrate biosynthesis; D-glycero-D-manno-heptose 7-phosphate biosynthesis; D-glycero-alpha-D-manno-heptose 7-phosphate and D-glycero-beta-D-manno-heptose 7-phosphate from sedoheptulose 7-phosphate: step 1/1. In terms of biological role, catalyzes the isomerization of sedoheptulose 7-phosphate in D-glycero-D-manno-heptose 7-phosphate. This is Phosphoheptose isomerase from Actinobacillus pleuropneumoniae serotype 5b (strain L20).